Here is a 509-residue protein sequence, read N- to C-terminus: DEAD-box ATP-dependent RNA helicase CshA (509 aa).

The Q motif signature appears at 2 to 30; that stretch reads QNFKELGISDKTVQTLEAMGFKEPTPIQK. Positions 33 to 203 constitute a Helicase ATP-binding domain; the sequence is IPYALEGDDI…QQFMKAPKII (171 aa). 46 to 53 provides a ligand contact to ATP; that stretch reads AQTGTGKT. The DEAD box motif lies at 150–153; it reads DEAD. One can recognise a Helicase C-terminal domain in the interval 214 to 375; that stretch reads QIDEYYTIVK…LRPPHRKEVL (162 aa). Basic residues-rich tracts occupy residues 440 to 459 and 467 to 482; these read ARKNRSSKGGSRRSNHKRGN and RRSKGSKGQSSKKKNQ. Residues 440-509 are disordered; sequence ARKNRSSKGG…KGRTFADHQK (70 aa). The segment covering 483 to 492 has biased composition (basic and acidic residues); sequence KKFDRRDKQQ.

This sequence belongs to the DEAD box helicase family. CshA subfamily. In terms of assembly, oligomerizes, may be a member of the RNA degradosome.

The protein resides in the cytoplasm. It carries out the reaction ATP + H2O = ADP + phosphate + H(+). Functionally, DEAD-box RNA helicase possibly involved in RNA degradation. Unwinds dsRNA in both 5'- and 3'-directions, has RNA-dependent ATPase activity. The protein is DEAD-box ATP-dependent RNA helicase CshA of Staphylococcus epidermidis (strain ATCC 12228 / FDA PCI 1200).